The following is a 317-amino-acid chain: Olfactory receptor 51Q1 (317 aa).

Residues 1 to 27 lie on the Extracellular side of the membrane; that stretch reads MSQVTNTTQEGIYFILTDIPGFEASHI. Asparagine 6 carries N-linked (GlcNAc...) asparagine glycosylation. The chain crosses the membrane as a helical span at residues 28–48; the sequence is WISIPVCCLYTISIMGNTTIL. Residues 49–56 are Cytoplasmic-facing; sequence TVIRTEPS. A helical transmembrane segment spans residues 57–77; it reads VHQRMYLFLSMLALTDLGLTL. Topologically, residues 78 to 101 are extracellular; that stretch reads TTLPTVMQLLWFNVRRISSEACFA. Cysteine 99 and cysteine 191 are oxidised to a cystine. A helical membrane pass occupies residues 102–122; that stretch reads QFFFLHGFSFMESSVLLAMSV. Residues 123-141 are Cytoplasmic-facing; it reads DCYVAICCPLHYASILTNE. Residues 142–162 traverse the membrane as a helical segment; sequence VIGRTGLAIICCCVLAVLPSL. The Extracellular portion of the chain corresponds to 163 to 198; that stretch reads FLLKRLPFCHSHLLSRSYCLHQDMIRLVCADIRLNS. The helical transmembrane segment at 199 to 219 threads the bilayer; it reads WYGFALALLIIIVDPLLIVIS. Over 220 to 239 the chain is Cytoplasmic; sequence YTLILKNILGTATWAERLRA. A helical transmembrane segment spans residues 240–260; the sequence is LNNCLSHILAVLVLYIPMVGV. Residues 261 to 275 lie on the Extracellular side of the membrane; that stretch reads SMTHRFAKHASPLVH. The chain crosses the membrane as a helical span at residues 276 to 296; the sequence is VIMANIYLLAPPVMNPIIYSV. The Cytoplasmic portion of the chain corresponds to 297–317; it reads KNKQIQWGMLNFLSLKNMHSR.

It belongs to the G-protein coupled receptor 1 family.

The protein localises to the cell membrane. Functionally, odorant receptor. This chain is Olfactory receptor 51Q1 (OR51Q1), found in Homo sapiens (Human).